A 278-amino-acid polypeptide reads, in one-letter code: Diaminopimelate epimerase (278 aa).

Substrate-binding residues include asparagine 13, glutamine 46, and asparagine 65. The Proton donor role is filled by cysteine 74. Substrate contacts are provided by residues 75-76 (GN), asparagine 157, asparagine 190, and 208-209 (ER). The Proton acceptor role is filled by cysteine 217. Substrate is bound at residue 218–219 (GT).

Belongs to the diaminopimelate epimerase family. Homodimer.

It is found in the cytoplasm. It carries out the reaction (2S,6S)-2,6-diaminopimelate = meso-2,6-diaminopimelate. It functions in the pathway amino-acid biosynthesis; L-lysine biosynthesis via DAP pathway; DL-2,6-diaminopimelate from LL-2,6-diaminopimelate: step 1/1. In terms of biological role, catalyzes the stereoinversion of LL-2,6-diaminopimelate (L,L-DAP) to meso-diaminopimelate (meso-DAP), a precursor of L-lysine and an essential component of the bacterial peptidoglycan. This is Diaminopimelate epimerase from Magnetococcus marinus (strain ATCC BAA-1437 / JCM 17883 / MC-1).